A 212-amino-acid polypeptide reads, in one-letter code: Fucoxanthin-chlorophyll a-c binding protein E, chloroplastic (212 aa).

A chloroplast-targeting transit peptide spans 1-34 (MAIACAAAPGLRGAEPFNGAALATSAKSSSAMKM). Transmembrane regions (helical) follow at residues 76–96 (IAML…PGML), 117–137 (IPPL…LFVV), and 178–198 (GRAA…SNQP).

This sequence belongs to the fucoxanthin chlorophyll protein family. As to quaternary structure, the LHC complex of chromophytic algae is composed of fucoxanthin, chlorophyll A and C bound non-covalently by fucoxanthin chlorophyll proteins (FCPs). The ratio of pigments in this LHC is; fucoxanthin: chlorophyll C: chlorophyll A; (0.6-1): (0.1-0.3): (1).

The protein localises to the plastid. The protein resides in the chloroplast thylakoid membrane. In terms of biological role, the light-harvesting complex (LHC) functions as a light receptor, it captures and delivers excitation energy to photosystems with which it is closely associated. Energy is transferred from the carotenoid and chlorophyll C (or B) to chlorophyll A and the photosynthetic reaction centers where it is used to synthesize ATP and reducing power. The polypeptide is Fucoxanthin-chlorophyll a-c binding protein E, chloroplastic (FCPE) (Macrocystis pyrifera (Giant kelp)).